The following is a 281-amino-acid chain: Probable endonuclease 4 (281 aa).

Zn(2+) is bound by residues His70, His110, Glu146, Asp180, His183, His217, Asp230, His232, and Glu262.

The protein belongs to the AP endonuclease 2 family. It depends on Zn(2+) as a cofactor.

It carries out the reaction Endonucleolytic cleavage to 5'-phosphooligonucleotide end-products.. Its function is as follows. Endonuclease IV plays a role in DNA repair. It cleaves phosphodiester bonds at apurinic or apyrimidinic (AP) sites, generating a 3'-hydroxyl group and a 5'-terminal sugar phosphate. In Nitratiruptor sp. (strain SB155-2), this protein is Probable endonuclease 4.